We begin with the raw amino-acid sequence, 430 residues long: C4-dicarboxylate transport protein (430 aa).

The next 9 membrane-spanning stretches (helical) occupy residues 8–28 (SLYF…HFYP), 44–64 (LIKM…IAGM), 76–96 (AALL…LVVV), 144–164 (AFAS…GFAL), 184–204 (VIFG…FGAM), 222–242 (LILC…GSIA), 289–309 (VVGL…SIYL), 326–346 (IWHQ…AAGV), and 352–372 (IVLA…LALI).

It belongs to the dicarboxylate/amino acid:cation symporter (DAACS) (TC 2.A.23) family.

It is found in the cell inner membrane. Responsible for the transport of dicarboxylates such as succinate, fumarate, and malate from the periplasm across the membrane. The chain is C4-dicarboxylate transport protein from Pectobacterium atrosepticum (strain SCRI 1043 / ATCC BAA-672) (Erwinia carotovora subsp. atroseptica).